A 612-amino-acid polypeptide reads, in one-letter code: Elongation factor 4 (612 aa).

One can recognise a tr-type G domain in the interval S12–T194. GTP-binding positions include D24–T29 and N141–D144.

The protein belongs to the TRAFAC class translation factor GTPase superfamily. Classic translation factor GTPase family. LepA subfamily.

The protein localises to the cell membrane. It carries out the reaction GTP + H2O = GDP + phosphate + H(+). Its function is as follows. Required for accurate and efficient protein synthesis under certain stress conditions. May act as a fidelity factor of the translation reaction, by catalyzing a one-codon backward translocation of tRNAs on improperly translocated ribosomes. Back-translocation proceeds from a post-translocation (POST) complex to a pre-translocation (PRE) complex, thus giving elongation factor G a second chance to translocate the tRNAs correctly. Binds to ribosomes in a GTP-dependent manner. The protein is Elongation factor 4 of Bacillus subtilis (strain 168).